We begin with the raw amino-acid sequence, 674 residues long: DNA ligase (674 aa).

NAD(+) is bound by residues 31 to 35 (DYEYD), 80 to 81 (SL), and Glu-110. Lys-112 (N6-AMP-lysine intermediate) is an active-site residue. NAD(+)-binding residues include Arg-133, Glu-167, Lys-283, and Lys-307. The Zn(2+) site is built by Cys-401, Cys-404, Cys-419, and Cys-424. One can recognise a BRCT domain in the interval 584–673 (KVEKIFEGMK…SKDEVKAVLE (90 aa)).

The protein belongs to the NAD-dependent DNA ligase family. LigA subfamily. Mg(2+) is required as a cofactor. Mn(2+) serves as cofactor.

The catalysed reaction is NAD(+) + (deoxyribonucleotide)n-3'-hydroxyl + 5'-phospho-(deoxyribonucleotide)m = (deoxyribonucleotide)n+m + AMP + beta-nicotinamide D-nucleotide.. Its function is as follows. DNA ligase that catalyzes the formation of phosphodiester linkages between 5'-phosphoryl and 3'-hydroxyl groups in double-stranded DNA using NAD as a coenzyme and as the energy source for the reaction. It is essential for DNA replication and repair of damaged DNA. In Clostridioides difficile (strain 630) (Peptoclostridium difficile), this protein is DNA ligase.